We begin with the raw amino-acid sequence, 445 residues long: C-terminal-binding protein 2 (445 aa).

At Arg-22 the chain carries Asymmetric dimethylarginine. NAD(+) contacts are provided by residues Ser-106, 186–191 (IGFGRT), Asp-210, 243–249 (CNLNEHN), 270–272 (AAR), and Asp-296. The active site involves Arg-272. Residue Glu-301 is part of the active site. Catalysis depends on His-321, which acts as the Proton donor. 321 to 324 (HTAW) lines the NAD(+) pocket. Residues 414-445 (THNLPTVAHPSQAPSPNQPTKHGDNREHPNEQ) are disordered. Residue Ser-428 is modified to Phosphoserine; by HIPK2. The segment covering 434-445 (KHGDNREHPNEQ) has biased composition (basic and acidic residues).

This sequence belongs to the D-isomer specific 2-hydroxyacid dehydrogenase family. As to quaternary structure, interacts with HIPK2, ZNF217 and PNN. Interacts with the transcription factors BKLF, delta EF1/AREB6/ZEB, EVI-1 and Friend of GATA (FOG) via the consensus motif P-X-[DNS]-L-[STVA]. Can form a complex with BKLF on a CACCC-box oligonucleotide. Can form homodimers or heterodimers of CTBP1 and CTBP2. Interacts with NRIP1 and WIZ. Interacts with PRDM16; represses white adipose tissue (WAT)-specific genes expression. Interacts with MCRIP1. In terms of processing, phosphorylation by HIPK2 on Ser-428 induces proteasomal degradation. In terms of tissue distribution, isoform 2 is specifically localized in synaptic ribbon (at protein level).

It is found in the nucleus. Its subcellular location is the synapse. In terms of biological role, corepressor targeting diverse transcription regulators. Functions in brown adipose tissue (BAT) differentiation. Isoform 2 probably acts as a scaffold for specialized synapses. This chain is C-terminal-binding protein 2 (Ctbp2), found in Rattus norvegicus (Rat).